Consider the following 179-residue polypeptide: Transcription factor 21 (179 aa).

Residues 20-86 are disordered; that stretch reads CDGIKLDPNK…KQVQRNAANA (67 aa). Residues 34–46 show a composition bias toward polar residues; that stretch reads SNDSNEESSTCDN. Over residues 50–64 the composition is skewed to basic residues; the sequence is KKGRGTSGKRRKASS. Over residues 70–80 the composition is skewed to polar residues; sequence GTINQEGKQVQ. The region spanning 79–131 is the bHLH domain; it reads VQRNAANARERARMRVLSKAFSRLKTTLPWVPPDTKLSKLDTLRLASSYIAHL.

As to quaternary structure, efficient DNA binding requires dimerization with another bHLH protein. As to expression, at the start of neurulation (stage 13), expressed in the pronephros. At tailbud stage (stage 25-28), expression is high in the anterior-most branchial arch and pronephric glomus. At stage 40, staining persists in the glomus and in the epicardium region of the heart, and at stage 42, expression is higher in the glomus than in the kidney tubule or duct. In adults, expression is highest in the rectum and the spleen, with significant expression in the duodenum, heart, kidney, lungs, pancreas, skin, liver and muscle.

The protein localises to the nucleus. In terms of biological role, involved in epithelial-mesenchymal interactions in kidney and lung morphogenesis that include epithelial differentiation and branching morphogenesis. The polypeptide is Transcription factor 21 (tcf21) (Xenopus laevis (African clawed frog)).